Here is a 213-residue protein sequence, read N- to C-terminus: MPMEPLILRHGGSVGWIEVICGSMFSGKTEELIRRLRRAQIARQRVEVFKPRMDRRYSETDVVSHDENALRSTPVDSAEQILLLADSADVVGIDEAQFFDMTLVDVCQQLANDGKRVIVAGLDQEYMGRPLEPMPQFMAVAEYVTKLHAICAVCGAPANHSQRLTDEEGRVVLGAADRYEPRCRRCFQPPRPTSTSSLKAPAPAATAPRPELP.

ATP contacts are provided by residues Gly22 to Thr29 and Asp94 to Gln97. Glu95 functions as the Proton acceptor in the catalytic mechanism. Positions 151, 154, 183, and 186 each coordinate Zn(2+). The interval Arg185–Pro213 is disordered. The span at Thr193–Pro213 shows a compositional bias: low complexity.

The protein belongs to the thymidine kinase family. Homotetramer.

The protein localises to the cytoplasm. It carries out the reaction thymidine + ATP = dTMP + ADP + H(+). The polypeptide is Thymidine kinase (Rhodothermus sp. (strain ITI 518)).